Reading from the N-terminus, the 499-residue chain is NADH-quinone oxidoreductase subunit N (499 aa).

A run of 14 helical transmembrane segments spans residues 16–36 (AAFSMSVVGGVGLAMIVLDAF), 42–62 (AIPWLGVAALGVSAVWEITHL), 77–97 (GGFVAFINLIILLTGLATILL), 109–129 (YGEVYALIMFCTVGMIMLGSA), 133–153 (VSIFLGLETMSVCLYVLTGFI), 167–187 (FLLGAFSTGFFLYGIALMYGA), 208–228 (LLFWGGFALFLVGFFFKVSAA), 252–272 (ATKAAAFAALILVLVHAVPGG), 274–294 (WQLSVAAVAVLTMVIGNVMAL), 302–322 (LLAYSSIAHAGYLLVGLSAGT), 327–347 (AGALFYLLVYAVMNIGAFGVM), 376–396 (GSTMGVFMLSLIGFPPLGGFI), 411–433 (TWLVVIGVLMSALSAYYYLRVVY), and 463–483 (GTLVVCAVALVVLGVFFGGVL).

This sequence belongs to the complex I subunit 2 family. As to quaternary structure, NDH-1 is composed of 14 different subunits. Subunits NuoA, H, J, K, L, M, N constitute the membrane sector of the complex.

It is found in the cell inner membrane. The enzyme catalyses a quinone + NADH + 5 H(+)(in) = a quinol + NAD(+) + 4 H(+)(out). Its function is as follows. NDH-1 shuttles electrons from NADH, via FMN and iron-sulfur (Fe-S) centers, to quinones in the respiratory chain. The immediate electron acceptor for the enzyme in this species is believed to be a menaquinone. Couples the redox reaction to proton translocation (for every two electrons transferred, four hydrogen ions are translocated across the cytoplasmic membrane), and thus conserves the redox energy in a proton gradient. The polypeptide is NADH-quinone oxidoreductase subunit N (Salinibacter ruber (strain DSM 13855 / M31)).